Reading from the N-terminus, the 211-residue chain is ATP-dependent dethiobiotin synthetase BioD (211 aa).

ATP is bound at residue 10–15; that stretch reads GIGKTY. T14 contributes to the Mg(2+) binding site. Residue K35 is part of the active site. S39 is a binding site for substrate. Residues D44, 105–108, and 165–166 contribute to the ATP site; these read EGAG and NC. Mg(2+) is bound by residues D44 and E105.

This sequence belongs to the dethiobiotin synthetase family. In terms of assembly, homodimer. Requires Mg(2+) as cofactor.

The protein resides in the cytoplasm. The enzyme catalyses (7R,8S)-7,8-diammoniononanoate + CO2 + ATP = (4R,5S)-dethiobiotin + ADP + phosphate + 3 H(+). Its pathway is cofactor biosynthesis; biotin biosynthesis; biotin from 7,8-diaminononanoate: step 1/2. In terms of biological role, catalyzes a mechanistically unusual reaction, the ATP-dependent insertion of CO2 between the N7 and N8 nitrogen atoms of 7,8-diaminopelargonic acid (DAPA, also called 7,8-diammoniononanoate) to form a ureido ring. This chain is ATP-dependent dethiobiotin synthetase BioD, found in Methanococcus vannielii (strain ATCC 35089 / DSM 1224 / JCM 13029 / OCM 148 / SB).